A 213-amino-acid polypeptide reads, in one-letter code: Calcium-dependent cell adhesion molecule 1 (213 aa).

4 consecutive repeat copies span residues 1 to 48 (MSVD…LVGS), 49 to 97 (NVRC…GAFQ), 98 to 146 (WAVD…LTPP), and 147 to 194 (DSEI…FPKN). A 4 X approximate tandem repeats region spans residues 1-194 (MSVDANKVKF…IKKDETFPKN (194 aa)).

It belongs to the Dictyostelium CAD family. Post-translationally, the N-terminus is blocked.

The protein resides in the cell membrane. Mediates calcium-dependent cell-cell adhesion during the early stage of development. This chain is Calcium-dependent cell adhesion molecule 1 (cadA), found in Dictyostelium discoideum (Social amoeba).